Reading from the N-terminus, the 445-residue chain is Gasdermin-A (445 aa).

The triggers pyroptosis stretch occupies residues 1–251 (MTMFENVTRA…VILIQASDVG (251 aa)). 9-13 (RALAR) contacts a cardiolipin. 4 beta stranded membrane passes run 78–95 (NFGF…DVDV), 99–120 (VKVK…TLSV), 163–179 (VTLE…SLPF), and 183–197 (LGLQ…AVTI).

It belongs to the gasdermin family. In terms of assembly, homooligomer; homooligomeric ring-shaped pore complex containing 18-36 subunits when inserted in the membrane. Post-translationally, cleavage by S.pyogenes SpeB relieves autoinhibition by releasing the N-terminal moiety (Gasdermin-A, N-terminal) that initiates pyroptosis. Palmitoylated. As to expression, expressed predominantly in the gastrointestinal tract and, at a lower level, in the skin. Also detected in mammary gland. In the gastrointestinal tract, mainly expressed in differentiated cells, including the differentiated cell layer of esophagus and mucus-secreting pit cells of the gastric epithelium. Down-regulated in gastric cancer cells.

It is found in the cytoplasm. It localises to the perinuclear region. Its subcellular location is the cytosol. The protein localises to the cell membrane. Its activity is regulated as follows. The full-length protein before cleavage is inactive: intramolecular interactions between N- and C-terminal domains mediate autoinhibition in the absence of activation signal. The intrinsic pyroptosis-inducing activity is carried by the released N-terminal moiety (Gasdermin-A, N-terminal) following cleavage by S.pyogenes effector protein SpeB. Functionally, this form constitutes the precursor of the pore-forming protein and acts as a sensor of infection: upon infection by S.pyogenes, specifically cleaved by S.pyogenes effector protein SpeB in epithelial cells, releasing the N-terminal moiety (Gasdermin-A, N-terminal) that binds to membranes and forms pores, triggering pyroptosis. Pore-forming protein that causes membrane permeabilization and pyroptosis. Released upon cleavage by S.pyogenes effector protein SpeB, and binds to membrane inner leaflet lipids. Homooligomerizes within the membrane and forms pores of 10-15 nanometers (nm) of inner diameter, triggering pyroptosis. Pyroptosis triggers the elimination of the infected skin cell, depriving the pathogen of its protective niche, while inducing an inflammatory response. This ultimately prevents bacterial penetration of the epithelial barrier and a subsequent systemic dissemination of the pathogen. Binds to cardiolipin and other acidic phospholipids, such as phosphatidylserine, which mediate its targeting to the inner leaflet membrane. The chain is Gasdermin-A from Homo sapiens (Human).